The following is an 86-amino-acid chain: Small ribosomal subunit protein bS16 (86 aa).

It belongs to the bacterial ribosomal protein bS16 family.

This chain is Small ribosomal subunit protein bS16, found in Mycoplasmoides gallisepticum (strain R(low / passage 15 / clone 2)) (Mycoplasma gallisepticum).